A 225-amino-acid polypeptide reads, in one-letter code: Orotate phosphoribosyltransferase (225 aa).

Position 29 (K29) interacts with 5-phospho-alpha-D-ribose 1-diphosphate. 37–38 (FF) provides a ligand contact to orotate. Residues 75–76 (YK), R105, K106, K109, H111, and 130–138 (DDVITAGTS) contribute to the 5-phospho-alpha-D-ribose 1-diphosphate site. Residues T134 and R162 each coordinate orotate.

The protein belongs to the purine/pyrimidine phosphoribosyltransferase family. PyrE subfamily. Homodimer. The cofactor is Mg(2+).

The enzyme catalyses orotidine 5'-phosphate + diphosphate = orotate + 5-phospho-alpha-D-ribose 1-diphosphate. Its pathway is pyrimidine metabolism; UMP biosynthesis via de novo pathway; UMP from orotate: step 1/2. Catalyzes the transfer of a ribosyl phosphate group from 5-phosphoribose 1-diphosphate to orotate, leading to the formation of orotidine monophosphate (OMP). The polypeptide is Orotate phosphoribosyltransferase (Bordetella petrii (strain ATCC BAA-461 / DSM 12804 / CCUG 43448)).